A 271-amino-acid polypeptide reads, in one-letter code: Phosphatidylglycerol--prolipoprotein diacylglyceryl transferase (271 aa).

4 helical membrane passes run 18-38 (LSVH…LWMA), 51-71 (IFID…RAYY), 89-109 (IWKG…TGIV), and 115-135 (GISF…GQAI). Residue R137 participates in a 1,2-diacyl-sn-glycero-3-phospho-(1'-sn-glycerol) binding. The next 3 helical transmembrane spans lie at 177–197 (HPTF…LLLL), 205–225 (GNLF…IEGM), and 236–256 (LRIA…LMIF).

Belongs to the Lgt family.

It localises to the cell membrane. It catalyses the reaction L-cysteinyl-[prolipoprotein] + a 1,2-diacyl-sn-glycero-3-phospho-(1'-sn-glycerol) = an S-1,2-diacyl-sn-glyceryl-L-cysteinyl-[prolipoprotein] + sn-glycerol 1-phosphate + H(+). It functions in the pathway protein modification; lipoprotein biosynthesis (diacylglyceryl transfer). Functionally, catalyzes the transfer of the diacylglyceryl group from phosphatidylglycerol to the sulfhydryl group of the N-terminal cysteine of a prolipoprotein, the first step in the formation of mature lipoproteins. This Bacillus velezensis (strain DSM 23117 / BGSC 10A6 / LMG 26770 / FZB42) (Bacillus amyloliquefaciens subsp. plantarum) protein is Phosphatidylglycerol--prolipoprotein diacylglyceryl transferase.